The sequence spans 503 residues: Maturase K (503 aa).

It belongs to the intron maturase 2 family. MatK subfamily.

Its subcellular location is the plastid. The protein localises to the chloroplast. In terms of biological role, usually encoded in the trnK tRNA gene intron. Probably assists in splicing its own and other chloroplast group II introns. The sequence is that of Maturase K from Liquidambar orientalis (Oriental sweet gum).